A 318-amino-acid chain; its full sequence is Ornithine carbamoyltransferase (318 aa).

Carbamoyl phosphate-binding positions include 63 to 66, glutamine 90, arginine 114, and 141 to 144; these read STRT and HPCQ. L-ornithine-binding positions include asparagine 172, aspartate 235, and 239 to 240; that span reads SM. Carbamoyl phosphate is bound by residues 275 to 276 and arginine 303; that span reads CL.

The protein belongs to the aspartate/ornithine carbamoyltransferase superfamily. OTCase family.

It is found in the cytoplasm. It carries out the reaction carbamoyl phosphate + L-ornithine = L-citrulline + phosphate + H(+). Its pathway is amino-acid biosynthesis; L-arginine biosynthesis; L-arginine from L-ornithine and carbamoyl phosphate: step 1/3. Functionally, reversibly catalyzes the transfer of the carbamoyl group from carbamoyl phosphate (CP) to the N(epsilon) atom of ornithine (ORN) to produce L-citrulline. The chain is Ornithine carbamoyltransferase from Parasynechococcus marenigrum (strain WH8102).